A 91-amino-acid polypeptide reads, in one-letter code: uncharacterized protein (91 aa).

Residues 50 to 70 (FGFFGGPFIGGLAGGLIGSAL) form a helical membrane-spanning segment.

It localises to the cell membrane. This is an uncharacterized protein from Bacillus subtilis (strain 168).